Consider the following 28-residue polypeptide: Phospholipase A2 (28 aa).

Gly28 lines the Ca(2+) pocket.

Requires Ca(2+) as cofactor. Expressed by the venom gland.

Its subcellular location is the secreted. It catalyses the reaction a 1,2-diacyl-sn-glycero-3-phosphocholine + H2O = a 1-acyl-sn-glycero-3-phosphocholine + a fatty acid + H(+). Functionally, PLA2 catalyzes the calcium-dependent hydrolysis of the 2-acyl groups in 3-sn-phosphoglycerides. This Scolopendra dehaani (Thai centipede) protein is Phospholipase A2.